A 163-amino-acid chain; its full sequence is Nucleotide-binding protein RHA1_ro01989 (163 aa).

Belongs to the YajQ family.

Functionally, nucleotide-binding protein. The protein is Nucleotide-binding protein RHA1_ro01989 of Rhodococcus jostii (strain RHA1).